A 238-amino-acid polypeptide reads, in one-letter code: 1-(5-phosphoribosyl)-5-[(5-phosphoribosylamino)methylideneamino] imidazole-4-carboxamide isomerase (238 aa).

Catalysis depends on Asp8, which acts as the Proton acceptor. The Proton donor role is filled by Asp129.

This sequence belongs to the HisA/HisF family.

It is found in the cytoplasm. It catalyses the reaction 1-(5-phospho-beta-D-ribosyl)-5-[(5-phospho-beta-D-ribosylamino)methylideneamino]imidazole-4-carboxamide = 5-[(5-phospho-1-deoxy-D-ribulos-1-ylimino)methylamino]-1-(5-phospho-beta-D-ribosyl)imidazole-4-carboxamide. The protein operates within amino-acid biosynthesis; L-histidine biosynthesis; L-histidine from 5-phospho-alpha-D-ribose 1-diphosphate: step 4/9. The protein is 1-(5-phosphoribosyl)-5-[(5-phosphoribosylamino)methylideneamino] imidazole-4-carboxamide isomerase of Lacticaseibacillus paracasei (strain ATCC 334 / BCRC 17002 / CCUG 31169 / CIP 107868 / KCTC 3260 / NRRL B-441) (Lactobacillus paracasei).